The following is a 610-amino-acid chain: MKVPSPSVREAASMYGTAVAIFLVILVAALQGSEPPESPFPYRIPLDPEGTLELSWNVSYVQETIHFQLLVRELKAGVLFGMSDRGELENADLVVLWTDGDSAYFGDAWSDQKGWIHLDAQQDYQLLRAQRTPEGLSLLFKRPFGTCDPKDYLIEDGTVHLVYGILEEPFWSLEAINTSALHTGLQRVQLLKPNVSVPALPADMRTMEVRAPDVLVPGQETTYWCYITELPDGFPRHHIVMYEPIVTEGNEALVHHMEVFQCAAEFESFPQFNGPCDSKMKPSRLNYCRNVLAAWALGAKAFYYPEEAGLAFGGAGSSRFLRLEVHYHNPLKIEGRRDSSGIRLYYTATLRRFDAGIMELGLVYTPVMAIPPQETAFVLTGYCTDKCTQLALPPSGIHIFASQLHTHLTGRKVVTVLARDGREREVVNRDDHYSPHFQEIRMLKKVVSVHPGDVLITSCTYNTEDRKLATVGGFGILEEMCVNYVHYYPQTQLELCKSAVDPGFLQKYFHFVNRFNGEEVCTCPQASVPEQFATVPWNSFNRQVLSALYGFAPISMHCNRSSAVRFQGDWNLQPLPEIISKLEEPTPRCPASRGRSPAGPTVVDIGGGKG.

Residues 1-9 (MKVPSPSVR) are Cytoplasmic-facing. Residues 10 to 30 (EAASMYGTAVAIFLVILVAAL) form a helical; Signal-anchor for type II membrane protein membrane-spanning segment. Residues 31-610 (QGSEPPESPF…TVVDIGGGKG (580 aa)) are Intragranular-facing. Positions 50–166 (GTLELSWNVS…GTVHLVYGIL (117 aa)) constitute a DOMON domain. Residues Asn-57, Asn-177, and Asn-194 are each glycosylated (N-linked (GlcNAc...) asparagine). Disulfide bonds link Cys-147–Cys-589, Cys-225–Cys-276, Cys-262–Cys-288, Cys-383–Cys-496, Cys-387–Cys-558, and Cys-459–Cys-481. Tyr-223 is a catalytic residue. His-255 and His-256 together coordinate Cu(2+). Residues His-326, His-405, His-407, and Met-480 each coordinate Cu(2+). His-405 is an active-site residue. The disordered stretch occupies residues 586-610 (TPRCPASRGRSPAGPTVVDIGGGKG).

It belongs to the copper type II ascorbate-dependent monooxygenase family. Homotetramer; composed of two disulfide-linked dimers. Cu(2+) serves as cofactor. Proteolytic cleavage after the membrane-anchor leads to the release of the soluble form. Post-translationally, N-glycosylated. As to expression, detected in adrenal medulla chromaffin cells.

The protein resides in the cytoplasmic vesicle. It localises to the secretory vesicle lumen. The protein localises to the secretory vesicle. It is found in the chromaffin granule lumen. Its subcellular location is the secreted. The protein resides in the secretory vesicle membrane. It localises to the chromaffin granule membrane. It carries out the reaction dopamine + 2 L-ascorbate + O2 = (R)-noradrenaline + 2 monodehydro-L-ascorbate radical + H2O. It functions in the pathway catecholamine biosynthesis; (R)-noradrenaline biosynthesis; (R)-noradrenaline from dopamine: step 1/1. In terms of biological role, catalyzes the hydroxylation of dopamine to noradrenaline (also known as norepinephrine), and is thus vital for regulation of these neurotransmitters. This is Dopamine beta-hydroxylase (DBH) from Equus caballus (Horse).